A 520-amino-acid chain; its full sequence is Amino-acid permease BAT1 homolog (520 aa).

The next 12 membrane-spanning stretches (helical) occupy residues 39-59 (VLSNFAFSFSIISVLTGITTL), 74-94 (FGWFVAGAFTMTVGLSMAEIC), 118-138 (FASWITGWFNIVGQWAVTTSV), 168-188 (VVIAFHAAILLSHAAINSLPI), 193-213 (FFGQFAAAWNMLGVFVLMIAV), 236-256 (AGIHSNFYIFVLGLLMSQYTL), 278-298 (IGIISAIGISIIVGWGYILGI), 334-354 (SGIGGIICLGIVAVAIYFCGM), 387-407 (VPINAVWLSALISLCMALPSL), 410-430 (LVAFQAMVSIATIGLYVAYAL), 454-474 (GVAVGWAAVLWVATITVLFSL), and 487-507 (YTPVAVGGLFLLVLSSWLLSA).

The protein belongs to the amino acid-polyamine-organocation (APC) superfamily. Amino acid/choline transporter (ACT) (TC 2.A.3.4) family.

The protein localises to the membrane. Its function is as follows. May be involved in the transport of amino acids. This chain is Amino-acid permease BAT1 homolog (BAT1), found in Oryza sativa subsp. japonica (Rice).